The following is a 251-amino-acid chain: 3-deoxy-manno-octulosonate cytidylyltransferase (251 aa).

The protein belongs to the KdsB family.

The protein resides in the cytoplasm. The catalysed reaction is 3-deoxy-alpha-D-manno-oct-2-ulosonate + CTP = CMP-3-deoxy-beta-D-manno-octulosonate + diphosphate. It functions in the pathway nucleotide-sugar biosynthesis; CMP-3-deoxy-D-manno-octulosonate biosynthesis; CMP-3-deoxy-D-manno-octulosonate from 3-deoxy-D-manno-octulosonate and CTP: step 1/1. The protein operates within bacterial outer membrane biogenesis; lipopolysaccharide biosynthesis. Activates KDO (a required 8-carbon sugar) for incorporation into bacterial lipopolysaccharide in Gram-negative bacteria. The sequence is that of 3-deoxy-manno-octulosonate cytidylyltransferase from Chelativorans sp. (strain BNC1).